Here is a 344-residue protein sequence, read N- to C-terminus: N-acetyl-gamma-glutamyl-phosphate reductase (344 aa).

Cysteine 148 is a catalytic residue.

The protein belongs to the NAGSA dehydrogenase family. Type 1 subfamily.

The protein resides in the cytoplasm. It catalyses the reaction N-acetyl-L-glutamate 5-semialdehyde + phosphate + NADP(+) = N-acetyl-L-glutamyl 5-phosphate + NADPH + H(+). It functions in the pathway amino-acid biosynthesis; L-arginine biosynthesis; N(2)-acetyl-L-ornithine from L-glutamate: step 3/4. Functionally, catalyzes the NADPH-dependent reduction of N-acetyl-5-glutamyl phosphate to yield N-acetyl-L-glutamate 5-semialdehyde. This is N-acetyl-gamma-glutamyl-phosphate reductase from Clostridium kluyveri (strain NBRC 12016).